Here is a 117-residue protein sequence, read N- to C-terminus: RutC family protein HD_0322 (117 aa).

It belongs to the RutC family.

This chain is RutC family protein HD_0322, found in Haemophilus ducreyi (strain 35000HP / ATCC 700724).